The following is a 527-amino-acid chain: BTB/POZ domain-containing protein At4g01160 (527 aa).

Residues 111–180 (NNNTSVLSVQ…MYSNSLSVTA (70 aa)) form the BTB domain. Residues 233 to 327 (VKPLTNAARQ…HMTTDRLKKI (95 aa)) enclose the BACK domain.

The protein operates within protein modification; protein ubiquitination. Functionally, may act as a substrate-specific adapter of an E3 ubiquitin-protein ligase complex (CUL3-RBX1-BTB) which mediates the ubiquitination and subsequent proteasomal degradation of target proteins. In Arabidopsis thaliana (Mouse-ear cress), this protein is BTB/POZ domain-containing protein At4g01160.